The sequence spans 682 residues: Potassium-transporting ATPase ATP-binding subunit (682 aa).

A run of 4 helical transmembrane segments spans residues 35–55, 62–82, 219–239, and 254–274; these read VMFVVWLGSVVTTLLAVAMAA, TGFTVAISVWLWFTVLFANFA, IALTILLLALTIVLLLATVTL, and VLVALLVCLIPTTIGGLLSAI. The active-site 4-aspartylphosphate intermediate is Asp-307. Residues Asp-344, Glu-348, 377-384, and Lys-395 contribute to the ATP site; that span reads FSAQTRMS. Residues Asp-518 and Asp-522 each contribute to the Mg(2+) site. 3 helical membrane passes run 577-597, 616-636, and 656-676; these read TFSIANDVAKYFAILPAAFAA, AILSAVIFNALVIVFLIPLAL, and IYGVGGLLVPFLGIKLIDMLL.

It belongs to the cation transport ATPase (P-type) (TC 3.A.3) family. Type IA subfamily. As to quaternary structure, the system is composed of three essential subunits: KdpA, KdpB and KdpC.

Its subcellular location is the cell inner membrane. It catalyses the reaction K(+)(out) + ATP + H2O = K(+)(in) + ADP + phosphate + H(+). In terms of biological role, part of the high-affinity ATP-driven potassium transport (or Kdp) system, which catalyzes the hydrolysis of ATP coupled with the electrogenic transport of potassium into the cytoplasm. This subunit is responsible for energy coupling to the transport system and for the release of the potassium ions to the cytoplasm. This Erwinia tasmaniensis (strain DSM 17950 / CFBP 7177 / CIP 109463 / NCPPB 4357 / Et1/99) protein is Potassium-transporting ATPase ATP-binding subunit.